We begin with the raw amino-acid sequence, 673 residues long: Synaptotagmin-like protein 4 (673 aa).

Residues 4–122 (ILDLSFLSEM…KATGDWFYDQ (119 aa)) enclose the RabBD domain. The FYVE-type zinc-finger motif lies at 63 to 105 (CARCQEGLGRLIPKSSTCVGCNHLVCRECRVLESNGSWRCKVC). The disordered stretch occupies residues 184-253 (FEVPKTRSGK…PGNQNAVCGD (70 aa)). A phosphoserine mark is found at Ser202, Ser205, Ser218, Ser222, and Ser275. The C2 1 domain occupies 358 to 480 (VTGKIAFSLK…KLDKKLDHCL (123 aa)). Ser490 is subject to Phosphoserine. The region spanning 509-635 (PASKLPVGGD…ISNGEVVDWM (127 aa)) is the C2 2 domain.

As to quaternary structure, part of a ternary complex containing STX1A and RAB27A. Can bind both dominant negative and dominant active mutants of RAB27A. Binds STXBP1, RAB3A, RAB8A and RAB27B. Interacts with MYO5A. As to expression, detected in the pancreatic islet, in particular in insulin-positive beta cells, and in pituitary.

The protein localises to the membrane. It localises to the cytoplasmic vesicle. The protein resides in the secretory vesicle membrane. In terms of biological role, modulates exocytosis of dense-core granules and secretion of hormones in the pancreas and the pituitary. Interacts with vesicles containing negatively charged phospholipids in a Ca(2+)-independent manner. The chain is Synaptotagmin-like protein 4 (Sytl4) from Mus musculus (Mouse).